The sequence spans 625 residues: Cytoskeleton-associated protein 2 (625 aa).

2 stretches are compositionally biased toward polar residues: residues 1-22 (MSTP…QSAF) and 107-128 (NELT…NQTL). Disordered stretches follow at residues 1-27 (MSTP…EQRR), 104-138 (KPSN…DDPQ), and 153-173 (NSKK…VPKK). Over residues 159–170 (VITEKPKHDANV) the composition is skewed to basic and acidic residues. Ser190 bears the Phosphoserine mark. 4 disordered regions span residues 195-237 (LQVK…SHMT), 259-282 (SQHN…VTVQ), 322-398 (RPAS…QNEQ), and 484-521 (SGKL…TPST). Composition is skewed to basic and acidic residues over residues 359-373 (ETAE…EWKA) and 500-514 (DCEK…DPTS). Residues Thr518 and Thr521 each carry the phosphothreonine modification. The residue at position 534 (Ser534) is a Phosphoserine. Thr535 and Thr536 each carry phosphothreonine. A Phosphotyrosine modification is found at Tyr538. Ser541 is modified (phosphoserine).

It belongs to the CKAP2 family. Associates with alpha- and beta-tubulins.

It is found in the cytoplasm. The protein localises to the cytoskeleton. In terms of biological role, possesses microtubule stabilizing properties. Involved in regulating aneuploidy, cell cycling, and cell death in a p53/TP53-dependent manner. This Bos taurus (Bovine) protein is Cytoskeleton-associated protein 2 (CKAP2).